Reading from the N-terminus, the 183-residue chain is ATP-dependent protease subunit HslV (183 aa).

Residue T2 is part of the active site. Residues G157, C160, and T163 each contribute to the Na(+) site.

The protein belongs to the peptidase T1B family. HslV subfamily. In terms of assembly, a double ring-shaped homohexamer of HslV is capped on each side by a ring-shaped HslU homohexamer. The assembly of the HslU/HslV complex is dependent on binding of ATP.

The protein resides in the cytoplasm. The catalysed reaction is ATP-dependent cleavage of peptide bonds with broad specificity.. Its activity is regulated as follows. Allosterically activated by HslU binding. In terms of biological role, protease subunit of a proteasome-like degradation complex believed to be a general protein degrading machinery. This is ATP-dependent protease subunit HslV from Vibrio campbellii (strain ATCC BAA-1116).